The following is a 689-amino-acid chain: Glycine--tRNA ligase beta subunit (689 aa).

Belongs to the class-II aminoacyl-tRNA synthetase family. Tetramer of two alpha and two beta subunits.

It localises to the cytoplasm. The enzyme catalyses tRNA(Gly) + glycine + ATP = glycyl-tRNA(Gly) + AMP + diphosphate. This chain is Glycine--tRNA ligase beta subunit, found in Lacticaseibacillus casei (strain BL23) (Lactobacillus casei).